We begin with the raw amino-acid sequence, 710 residues long: MEVELEIKGKKLVLQTGIFAKQTNGSVLAKYGDTYVLCTVVAEKTPKEGLDFVPLTIDYQEKAYSAGKIPGGFFKREGKPTDREILVSRLIDRPVRPLFPDGFNYETQGIASVLSYGDENIADILSIIGISSALTISDIPFNGPVAAVRVGMVEEEFILNPDNDEAEKSILNLVVAGTEEAVTMVEGGAAECSEETLVEALKFAHTHIKKIIALQKKLQQLSGKPKREIISLNGDEEIQKAILNIIGGKIENALFLPKKVERQQALDELLNECLQNLNTEEFRQKLYGNFDKDISLEITNAFDKVIKKFMRESIVKKGIRADGRKSDEIRPITCMIGILPRVHGSALFTRGETQALVATTLGTSEDEQKVDSLEGEIFKTFMLHYNFLPFSVGEVKPLRAPGRREIGHGYLAERALSYVIPSKDEFPYTIRVVSDILESNGSSSMATVCGATLSLMDAGVPIKAPVAGVAMGLIKEGDKTVVLTDILGMEDHYGDMDFKVAGTEKGITAFQMDVKISGISYEIFKKALKQAKQARLFILKKMAETISEPKKELSLYAPRIYKIQVKPEKIRDIIGTGGKVIKGIIEETGVKIDIEDKEGIVKIASSNESAAQKAIEIIKGITQEAELGRIYMGKVTRIVDFGAFVEIMPGVEGLLHISQIADKRIQKVSEVLKTGEQIPVKVIEIDELGRVRLSRKEALREIENRTATKT.

D491 and D497 together coordinate Mg(2+). Residues 558–618 (PRIYKIQVKP…SAAQKAIEII (61 aa)) form the KH domain. Residues 628–696 (GRIYMGKVTR…ELGRVRLSRK (69 aa)) enclose the S1 motif domain.

It belongs to the polyribonucleotide nucleotidyltransferase family. The cofactor is Mg(2+).

The protein resides in the cytoplasm. It carries out the reaction RNA(n+1) + phosphate = RNA(n) + a ribonucleoside 5'-diphosphate. Involved in mRNA degradation. Catalyzes the phosphorolysis of single-stranded polyribonucleotides processively in the 3'- to 5'-direction. The chain is Polyribonucleotide nucleotidyltransferase from Thermodesulfovibrio yellowstonii (strain ATCC 51303 / DSM 11347 / YP87).